Consider the following 560-residue polypeptide: Dihydroxy-acid dehydratase (560 aa).

Residue D80 participates in Mg(2+) binding. C121 is a [2Fe-2S] cluster binding site. Positions 122 and 123 each coordinate Mg(2+). At K123 the chain carries N6-carboxylysine. Residue C194 participates in [2Fe-2S] cluster binding. E447 contributes to the Mg(2+) binding site. S473 acts as the Proton acceptor in catalysis.

This sequence belongs to the IlvD/Edd family. In terms of assembly, homodimer. Requires [2Fe-2S] cluster as cofactor. It depends on Mg(2+) as a cofactor.

The enzyme catalyses (2R)-2,3-dihydroxy-3-methylbutanoate = 3-methyl-2-oxobutanoate + H2O. It catalyses the reaction (2R,3R)-2,3-dihydroxy-3-methylpentanoate = (S)-3-methyl-2-oxopentanoate + H2O. It participates in amino-acid biosynthesis; L-isoleucine biosynthesis; L-isoleucine from 2-oxobutanoate: step 3/4. The protein operates within amino-acid biosynthesis; L-valine biosynthesis; L-valine from pyruvate: step 3/4. Functions in the biosynthesis of branched-chain amino acids. Catalyzes the dehydration of (2R,3R)-2,3-dihydroxy-3-methylpentanoate (2,3-dihydroxy-3-methylvalerate) into 2-oxo-3-methylpentanoate (2-oxo-3-methylvalerate) and of (2R)-2,3-dihydroxy-3-methylbutanoate (2,3-dihydroxyisovalerate) into 2-oxo-3-methylbutanoate (2-oxoisovalerate), the penultimate precursor to L-isoleucine and L-valine, respectively. This Chlorobaculum parvum (strain DSM 263 / NCIMB 8327) (Chlorobium vibrioforme subsp. thiosulfatophilum) protein is Dihydroxy-acid dehydratase.